The following is a 231-amino-acid chain: Orotidine 5'-phosphate decarboxylase (231 aa).

Substrate is bound by residues aspartate 12, lysine 34, 61 to 70 (DMKLLDIDNT), threonine 116, arginine 177, glutamine 186, glycine 206, and arginine 207. Lysine 63 (proton donor) is an active-site residue.

It belongs to the OMP decarboxylase family. Type 1 subfamily. In terms of assembly, homodimer.

It carries out the reaction orotidine 5'-phosphate + H(+) = UMP + CO2. Its pathway is pyrimidine metabolism; UMP biosynthesis via de novo pathway; UMP from orotate: step 2/2. Functionally, catalyzes the decarboxylation of orotidine 5'-monophosphate (OMP) to uridine 5'-monophosphate (UMP). The chain is Orotidine 5'-phosphate decarboxylase from Allorhizobium ampelinum (strain ATCC BAA-846 / DSM 112012 / S4) (Agrobacterium vitis (strain S4)).